A 255-amino-acid polypeptide reads, in one-letter code: uncharacterized protein (255 aa).

A Microbody targeting signal motif is present at residues S253 to I255.

Belongs to the enoyl-CoA hydratase/isomerase family.

The protein localises to the peroxisome. This is an uncharacterized protein from Caenorhabditis elegans.